The following is a 160-amino-acid chain: Phosphopantetheine adenylyltransferase (160 aa).

Ser9 is a binding site for substrate. Residues 9-10 (SF) and His17 each bind ATP. Substrate-binding residues include Lys41, Leu73, and Lys87. Residues 88–90 (GLR), Glu98, and 123–129 (YGYLSSS) each bind ATP.

The protein belongs to the bacterial CoaD family. In terms of assembly, homohexamer. It depends on Mg(2+) as a cofactor.

The protein localises to the cytoplasm. It catalyses the reaction (R)-4'-phosphopantetheine + ATP + H(+) = 3'-dephospho-CoA + diphosphate. Its pathway is cofactor biosynthesis; coenzyme A biosynthesis; CoA from (R)-pantothenate: step 4/5. Its function is as follows. Reversibly transfers an adenylyl group from ATP to 4'-phosphopantetheine, yielding dephospho-CoA (dPCoA) and pyrophosphate. This chain is Phosphopantetheine adenylyltransferase, found in Caldanaerobacter subterraneus subsp. tengcongensis (strain DSM 15242 / JCM 11007 / NBRC 100824 / MB4) (Thermoanaerobacter tengcongensis).